The sequence spans 228 residues: Isoprenyl transferase (228 aa).

Residue Asp-15 is part of the active site. Asp-15 is a Mg(2+) binding site. Residues 16-19 (GNGR), Trp-20, Arg-28, His-32, and 60-62 (STE) each bind substrate. Asn-63 serves as the catalytic Proton acceptor. Substrate-binding positions include Trp-64, Arg-66, Arg-176, and 182-184 (RLS). Glu-195 contacts Mg(2+).

Belongs to the UPP synthase family. Homodimer. Requires Mg(2+) as cofactor.

Its function is as follows. Catalyzes the condensation of isopentenyl diphosphate (IPP) with allylic pyrophosphates generating different type of terpenoids. The chain is Isoprenyl transferase from Wolinella succinogenes (strain ATCC 29543 / DSM 1740 / CCUG 13145 / JCM 31913 / LMG 7466 / NCTC 11488 / FDC 602W) (Vibrio succinogenes).